The chain runs to 107 residues: UPF0045 protein in glkA 3'region (107 aa).

Belongs to the UPF0045 family.

This is UPF0045 protein in glkA 3'region (dglA) from Staphylococcus xylosus.